The primary structure comprises 242 residues: UDP-2,3-diacylglucosamine hydrolase (242 aa).

Residues Asp7, His9, Asp40, Asn78, and His113 each coordinate Mn(2+). 78-79 provides a ligand contact to substrate; it reads NR. Residues Asp121, Ser159, Thr163, Lys166, and His194 each coordinate substrate. Positions 194 and 196 each coordinate Mn(2+).

The protein belongs to the LpxH family. Requires Mn(2+) as cofactor.

Its subcellular location is the cell inner membrane. It carries out the reaction UDP-2-N,3-O-bis[(3R)-3-hydroxytetradecanoyl]-alpha-D-glucosamine + H2O = 2-N,3-O-bis[(3R)-3-hydroxytetradecanoyl]-alpha-D-glucosaminyl 1-phosphate + UMP + 2 H(+). It participates in glycolipid biosynthesis; lipid IV(A) biosynthesis; lipid IV(A) from (3R)-3-hydroxytetradecanoyl-[acyl-carrier-protein] and UDP-N-acetyl-alpha-D-glucosamine: step 4/6. Hydrolyzes the pyrophosphate bond of UDP-2,3-diacylglucosamine to yield 2,3-diacylglucosamine 1-phosphate (lipid X) and UMP by catalyzing the attack of water at the alpha-P atom. Involved in the biosynthesis of lipid A, a phosphorylated glycolipid that anchors the lipopolysaccharide to the outer membrane of the cell. The sequence is that of UDP-2,3-diacylglucosamine hydrolase from Ectopseudomonas mendocina (strain ymp) (Pseudomonas mendocina).